Consider the following 29-residue polypeptide: uncharacterized protein (29 aa).

This is an uncharacterized protein from Saccharomyces cerevisiae (strain ATCC 204508 / S288c) (Baker's yeast).